Reading from the N-terminus, the 105-residue chain is Large ribosomal subunit protein eL30 (105 aa).

Glycyl lysine isopeptide (Lys-Gly) (interchain with G-Cter in ubiquitin) cross-links involve residues Lys-22, Lys-53, and Lys-83.

This sequence belongs to the eukaryotic ribosomal protein eL30 family. In terms of assembly, component of the large ribosomal subunit (LSU). Mature yeast ribosomes consist of a small (40S) and a large (60S) subunit. The 40S small subunit contains 1 molecule of ribosomal RNA (18S rRNA) and 33 different proteins (encoded by 57 genes). The large 60S subunit contains 3 rRNA molecules (25S, 5.8S and 5S rRNA) and 46 different proteins (encoded by 81 genes).

It localises to the cytoplasm. Its function is as follows. Component of the ribosome, a large ribonucleoprotein complex responsible for the synthesis of proteins in the cell. The small ribosomal subunit (SSU) binds messenger RNAs (mRNAs) and translates the encoded message by selecting cognate aminoacyl-transfer RNA (tRNA) molecules. The large subunit (LSU) contains the ribosomal catalytic site termed the peptidyl transferase center (PTC), which catalyzes the formation of peptide bonds, thereby polymerizing the amino acids delivered by tRNAs into a polypeptide chain. The nascent polypeptides leave the ribosome through a tunnel in the LSU and interact with protein factors that function in enzymatic processing, targeting, and the membrane insertion of nascent chains at the exit of the ribosomal tunnel. The polypeptide is Large ribosomal subunit protein eL30 (Saccharomyces cerevisiae (strain ATCC 204508 / S288c) (Baker's yeast)).